Consider the following 431-residue polypeptide: Adenylosuccinate synthetase (431 aa).

Residues 12 to 18 (GDEGKGK) and 40 to 42 (GHT) contribute to the GTP site. Asp13 functions as the Proton acceptor in the catalytic mechanism. Residues Asp13 and Gly40 each contribute to the Mg(2+) site. IMP-binding positions include 13 to 16 (DEGK), 38 to 41 (NAGH), Thr131, Arg145, Gln225, Thr240, and Arg304. The Proton donor role is filled by His41. 300–306 (TTTGRKR) serves as a coordination point for substrate. GTP contacts are provided by residues Arg306, 332 to 334 (KLD), and 414 to 416 (STS).

The protein belongs to the adenylosuccinate synthetase family. As to quaternary structure, homodimer. Mg(2+) is required as a cofactor.

Its subcellular location is the cytoplasm. It carries out the reaction IMP + L-aspartate + GTP = N(6)-(1,2-dicarboxyethyl)-AMP + GDP + phosphate + 2 H(+). Its pathway is purine metabolism; AMP biosynthesis via de novo pathway; AMP from IMP: step 1/2. Its function is as follows. Plays an important role in the de novo pathway of purine nucleotide biosynthesis. Catalyzes the first committed step in the biosynthesis of AMP from IMP. The protein is Adenylosuccinate synthetase of Dinoroseobacter shibae (strain DSM 16493 / NCIMB 14021 / DFL 12).